The following is a 350-amino-acid chain: MSTVQTVLGTITPNLLGRTLTHEHVALDFEHFYRPPPPDFESELKAKISMSTLGYVRLYPYSSKENVRFYDGEALEAAKKDVLLYKKHGGGSIVENSSYGLKRNLEFIVELAKSTGVHFIAGTGHYIHAMQDASHGSLTVEQMSDLYSKDIITGLQVNGKVVKCGFIGEVASVYPIHDFEKNAIKAAGEIQEVLGCGVSMHPHRVTKAPFEIMRLYLEAGGRADKCVMSHLDRTIFDIDELLEFAKLGCYIQYDLFGTECSFYQLNTSVDMISDGQRIDNLIKLIKEGLVDKLLMSHDIHTKHRLTSYGGHGYHHIHTNILPRMFDRGVTLEQVEQITVTNPANWLAFDP.

His-22, His-24, Glu-169, His-201, His-230, and Asp-298 together coordinate a divalent metal cation.

Belongs to the metallo-dependent hydrolases superfamily. Phosphotriesterase family. Requires a divalent metal cation as cofactor.

This chain is Phosphotriesterase-related protein, found in Drosophila sechellia (Fruit fly).